A 396-amino-acid polypeptide reads, in one-letter code: Putative cystathionine beta-lyase (396 aa).

Position 210 is an N6-(pyridoxal phosphate)lysine (Lys-210).

This sequence belongs to the trans-sulfuration enzymes family. It depends on pyridoxal 5'-phosphate as a cofactor.

The enzyme catalyses L,L-cystathionine + H2O = L-homocysteine + pyruvate + NH4(+). It catalyses the reaction an S-substituted L-cysteine + H2O = a thiol + pyruvate + NH4(+). The protein operates within amino-acid biosynthesis; L-methionine biosynthesis via de novo pathway; L-homocysteine from L-cystathionine: step 1/1. Its function is as follows. Catalyzes the cleavage of cystathionine to homocysteine, pyruvate and ammonia during methionine biosynthesis. This is Putative cystathionine beta-lyase (metC) from Rhizobium johnstonii (strain DSM 114642 / LMG 32736 / 3841) (Rhizobium leguminosarum bv. viciae).